We begin with the raw amino-acid sequence, 107 residues long: Iron-binding protein IscA (107 aa).

3 residues coordinate Fe cation: Cys-35, Cys-99, and Cys-101.

Belongs to the HesB/IscA family. As to quaternary structure, homodimer; may form tetramers and higher multimers. Fe cation is required as a cofactor.

Its function is as follows. Is able to transfer iron-sulfur clusters to apo-ferredoxin. Multiple cycles of [2Fe2S] cluster formation and transfer are observed, suggesting that IscA acts catalytically. Recruits intracellular free iron so as to provide iron for the assembly of transient iron-sulfur cluster in IscU in the presence of IscS, L-cysteine and the thioredoxin reductase system TrxA/TrxB. The chain is Iron-binding protein IscA from Photorhabdus laumondii subsp. laumondii (strain DSM 15139 / CIP 105565 / TT01) (Photorhabdus luminescens subsp. laumondii).